A 234-amino-acid chain; its full sequence is Thiamine import ATP-binding protein ThiQ (234 aa).

The region spanning 2-230 is the ABC transporter domain; the sequence is LVLDDVQYTY…HPSKTLQAFV (229 aa). ATP is bound at residue 32–39; the sequence is GPSGAGKS.

It belongs to the ABC transporter superfamily. Thiamine importer (TC 3.A.1.19.1) family. The complex is composed of two ATP-binding proteins (ThiQ), two transmembrane proteins (ThiP) and a solute-binding protein (ThiB).

The protein resides in the cell inner membrane. It catalyses the reaction thiamine(out) + ATP + H2O = thiamine(in) + ADP + phosphate + H(+). Its function is as follows. Part of the ABC transporter complex ThiBPQ involved in thiamine import. Responsible for energy coupling to the transport system. The sequence is that of Thiamine import ATP-binding protein ThiQ from Vibrio parahaemolyticus serotype O3:K6 (strain RIMD 2210633).